The following is a 914-amino-acid chain: Solute carrier family 12 member 9 (914 aa).

Over 1–36 (MASESSPLLAYRLLGEEGAAFPPNGAGVSGVPSSRK) the chain is Cytoplasmic. Serine 6 is subject to Phosphoserine. The helical transmembrane segment at 37–57 (LSTFLGVVVPTVLSMFSIVVF) threads the bilayer. Residues 58–72 (LRIGFVVGHAGLLQA) lie on the Extracellular side of the membrane. The helical transmembrane segment at 73 to 93 (LAMLLVAYIILALTVLSVCAI) threads the bilayer. Over 94 to 119 (ATNGAVRGGGAYFMISRTLGPEVGGS) the chain is Cytoplasmic. Residues 120-140 (IGLMFYLANVCGCAVSLLGLV) form a helical membrane-spanning segment. Over 141–167 (ESILDVFGADATGSSGIQVLPQGYGWN) the chain is Extracellular. The helical transmembrane segment at 168-188 (LLYGSLLLGLVGGVCTLGAGL) threads the bilayer. The Cytoplasmic segment spans residues 189 to 193 (YARAS). Residues 194 to 214 (FLTFLLVSGSLASVLVSFVAV) form a helical membrane-spanning segment. The Extracellular portion of the chain corresponds to 215-262 (GPRNIPLAPRPGTNASSVPHRHGHFTGFNGSTLRDNLGAGYAEDYTTG). Asparagine 228 and asparagine 243 each carry an N-linked (GlcNAc...) asparagine glycan. The chain crosses the membrane as a helical span at residues 263–283 (AMMTFASVFAVLFNGCTGIMA). Topologically, residues 284 to 297 (GANMSGELKDPSRA) are cytoplasmic. The helical transmembrane segment at 298–318 (IPLGTIIAVAYTFFIYILLFF) threads the bilayer. At 319–338 (LSSFTCDRALLQEDYGFFRD) the chain is on the extracellular side. A helical transmembrane segment spans residues 339-359 (ISLWPPLVLIGIYATALSASM). Topologically, residues 360–376 (SSLIGASRILHALAQDD) are cytoplasmic. Residues 377–399 (LFGVILAPAKVVSGGGNPWGAVL) traverse the membrane as a helical segment. Residues 400-416 (YSWGLVQLVLLAGKLNT) are Extracellular-facing. Residues 417-437 (LAAVVTVFYLVAYAAVDLSCL) traverse the membrane as a helical segment. The Cytoplasmic segment spans residues 438–466 (SLEWASAPNFRPTFSLFSWHTCLLGVASC). Residues 467 to 487 (LLMMFLISPGAAGGSLLLMGL) traverse the membrane as a helical segment. The Extracellular portion of the chain corresponds to 488 to 740 (LSALLTARGG…LLRPRGGPGY (253 aa)). A disordered region spans residues 645–678 (PAFSEPAEGTREGGSPALSTLFPPPRAPGSPRAL). The helical transmembrane segment at 741–761 (VDVCGLFLLQMATILSMVPAW) threads the bilayer. Residues 762-914 (HSARLRIFLC…GVTPVTCTDL (153 aa)) are Cytoplasmic-facing. Positions 844–864 (QGRGTVGGPGGPEGRDGEEGP) are disordered.

The protein belongs to the SLC12A transporter family. Interacts with SLC12A1.

It is found in the cell membrane. The protein resides in the lysosome membrane. Its function is as follows. May be an inhibitor of SLC12A1. Seems to correspond to a subunit of a multimeric transport system and thus, additional subunits may be required for its function. May play a role in lysosomal ion flux and osmoregulation. This chain is Solute carrier family 12 member 9 (Slc12a9), found in Mus musculus (Mouse).